A 231-amino-acid chain; its full sequence is 7-cyano-7-deazaguanine synthase (231 aa).

Residue 8–18 (FSGGQDSTTCL) coordinates ATP. Residues C188, C197, C200, and C203 each coordinate Zn(2+).

It belongs to the QueC family. The cofactor is Zn(2+).

The enzyme catalyses 7-carboxy-7-deazaguanine + NH4(+) + ATP = 7-cyano-7-deazaguanine + ADP + phosphate + H2O + H(+). It functions in the pathway purine metabolism; 7-cyano-7-deazaguanine biosynthesis. Its function is as follows. Catalyzes the ATP-dependent conversion of 7-carboxy-7-deazaguanine (CDG) to 7-cyano-7-deazaguanine (preQ(0)). This is 7-cyano-7-deazaguanine synthase from Salmonella gallinarum (strain 287/91 / NCTC 13346).